The chain runs to 177 residues: Large ribosomal subunit protein uL6 (177 aa).

Belongs to the universal ribosomal protein uL6 family. In terms of assembly, part of the 50S ribosomal subunit.

Functionally, this protein binds to the 23S rRNA, and is important in its secondary structure. It is located near the subunit interface in the base of the L7/L12 stalk, and near the tRNA binding site of the peptidyltransferase center. The sequence is that of Large ribosomal subunit protein uL6 from Nitrosospira multiformis (strain ATCC 25196 / NCIMB 11849 / C 71).